The following is a 133-amino-acid chain: Small ribosomal subunit protein uS11 (133 aa).

The disordered stretch occupies residues 1–22 (MPPKTRGAVRKPRKKDKKNIAL). Basic residues predominate over residues 7–17 (GAVRKPRKKDK).

Belongs to the universal ribosomal protein uS11 family. Part of the 30S ribosomal subunit. Interacts with proteins S7 and S18. Binds to IF-3.

Its function is as follows. Located on the platform of the 30S subunit, it bridges several disparate RNA helices of the 16S rRNA. Forms part of the Shine-Dalgarno cleft in the 70S ribosome. The sequence is that of Small ribosomal subunit protein uS11 from Renibacterium salmoninarum (strain ATCC 33209 / DSM 20767 / JCM 11484 / NBRC 15589 / NCIMB 2235).